A 403-amino-acid chain; its full sequence is Phosphopentomutase (403 aa).

Residues aspartate 13, aspartate 298, histidine 303, aspartate 339, histidine 340, and histidine 351 each coordinate Mn(2+).

It belongs to the phosphopentomutase family. The cofactor is Mn(2+).

The protein localises to the cytoplasm. The enzyme catalyses 2-deoxy-alpha-D-ribose 1-phosphate = 2-deoxy-D-ribose 5-phosphate. It catalyses the reaction alpha-D-ribose 1-phosphate = D-ribose 5-phosphate. It participates in carbohydrate degradation; 2-deoxy-D-ribose 1-phosphate degradation; D-glyceraldehyde 3-phosphate and acetaldehyde from 2-deoxy-alpha-D-ribose 1-phosphate: step 1/2. Isomerase that catalyzes the conversion of deoxy-ribose 1-phosphate (dRib-1-P) and ribose 1-phosphate (Rib-1-P) to deoxy-ribose 5-phosphate (dRib-5-P) and ribose 5-phosphate (Rib-5-P), respectively. The protein is Phosphopentomutase of Streptococcus pyogenes serotype M18 (strain MGAS8232).